Consider the following 83-residue polypeptide: uncharacterized protein (83 aa).

A disordered region spans residues 57 to 83; the sequence is ESVEEEEEFEDYDEFEEEEEYYYDDEY.

This is an uncharacterized protein from Archaeoglobus fulgidus (strain ATCC 49558 / DSM 4304 / JCM 9628 / NBRC 100126 / VC-16).